The primary structure comprises 399 residues: Elongation factor Tu (399 aa).

The tr-type G domain maps to 10–204; it reads KPHVNIGTIG…AVDASIPEPE (195 aa). The interval 19–26 is G1; it reads GHVDHGKT. 19-26 provides a ligand contact to GTP; it reads GHVDHGKT. T26 is a Mg(2+) binding site. The G2 stretch occupies residues 60 to 64; it reads GITIN. The interval 81 to 84 is G3; that stretch reads DCPG. GTP-binding positions include 81–85 and 136–139; these read DCPGH and NKCD. Positions 136 to 139 are G4; it reads NKCD. Residues 174 to 176 are G5; the sequence is SGL.

The protein belongs to the TRAFAC class translation factor GTPase superfamily. Classic translation factor GTPase family. EF-Tu/EF-1A subfamily. In terms of assembly, monomer.

The protein localises to the cytoplasm. The enzyme catalyses GTP + H2O = GDP + phosphate + H(+). In terms of biological role, GTP hydrolase that promotes the GTP-dependent binding of aminoacyl-tRNA to the A-site of ribosomes during protein biosynthesis. This Synechococcus sp. (strain CC9902) protein is Elongation factor Tu.